Reading from the N-terminus, the 78-residue chain is Acyl carrier protein (78 aa).

One can recognise a Carrier domain in the interval 2 to 77; that stretch reads SNLEERVKKI…AAIDYVTANA (76 aa). Ser-37 is subject to O-(pantetheine 4'-phosphoryl)serine.

It belongs to the acyl carrier protein (ACP) family. In terms of processing, 4'-phosphopantetheine is transferred from CoA to a specific serine of apo-ACP by AcpS. This modification is essential for activity because fatty acids are bound in thioester linkage to the sulfhydryl of the prosthetic group.

It localises to the cytoplasm. The protein operates within lipid metabolism; fatty acid biosynthesis. Carrier of the growing fatty acid chain in fatty acid biosynthesis. This chain is Acyl carrier protein, found in Vibrio vulnificus (strain CMCP6).